We begin with the raw amino-acid sequence, 479 residues long: Ribosomal RNA small subunit methyltransferase F (479 aa).

S-adenosyl-L-methionine is bound by residues 125-131 (AAAPGSK), Glu149, Asp176, and Asp194. Cys247 acts as the Nucleophile in catalysis.

This sequence belongs to the class I-like SAM-binding methyltransferase superfamily. RsmB/NOP family.

The protein resides in the cytoplasm. The catalysed reaction is cytidine(1407) in 16S rRNA + S-adenosyl-L-methionine = 5-methylcytidine(1407) in 16S rRNA + S-adenosyl-L-homocysteine + H(+). Functionally, specifically methylates the cytosine at position 1407 (m5C1407) of 16S rRNA. The sequence is that of Ribosomal RNA small subunit methyltransferase F from Salmonella arizonae (strain ATCC BAA-731 / CDC346-86 / RSK2980).